We begin with the raw amino-acid sequence, 506 residues long: Protein NEN3 (506 aa).

Residues F15 to V176 form the Exonuclease domain. Residues D17 and E19 each contribute to the Mg(2+) site. H164 functions as the Proton donor/acceptor in the catalytic mechanism. D169 is a binding site for Mg(2+). Disordered regions lie at residues K204–D240 and A289–S313. The segment covering S222 to S238 has biased composition (low complexity). Residues E290–D299 are compositionally biased toward basic and acidic residues.

The cofactor is Mg(2+).

Probable exonuclease that may be involved in enuclation of sieve elements. The polypeptide is Protein NEN3 (NEN3) (Arabidopsis thaliana (Mouse-ear cress)).